A 419-amino-acid polypeptide reads, in one-letter code: Large ribosomal subunit protein uL4 (419 aa).

Alanine 2 carries the N-acetylalanine modification. Position 14 is an N6-acetyllysine (lysine 14). Arginine 97 is modified (omega-N-methylarginine). Lysine 106 carries the post-translational modification N6-acetyllysine. Lysine 239 participates in a covalent cross-link: Glycyl lysine isopeptide (Lys-Gly) (interchain with G-Cter in SUMO2). Lysine 259 is modified (N6-acetyllysine). Position 266 is a phosphothreonine (threonine 266). A phosphoserine mark is found at serine 290 and serine 295. Citrulline is present on arginine 300. A Glycyl lysine isopeptide (Lys-Gly) (interchain with G-Cter in SUMO2) cross-link involves residue lysine 327. N6-acetyllysine is present on residues lysine 333 and lysine 353. Position 364 is an N6-acetyllysine; alternate (lysine 364). Residue lysine 364 forms a Glycyl lysine isopeptide (Lys-Gly) (interchain with G-Cter in SUMO1); alternate linkage. The segment covering 364–379 (KSEKVVPEKGTADKKP) has biased composition (basic and acidic residues). Residues 364–419 (KSEKVVPEKGTADKKPAVGKKGKKVDAKKQKPAGKKVVAKKPAEKKPTTEEKKPAA) are disordered. Phosphoserine is present on serine 365. A compositionally biased stretch (basic residues) spans 393-402 (QKPAGKKVVA). Over residues 404–419 (KPAEKKPTTEEKKPAA) the composition is skewed to basic and acidic residues.

It belongs to the universal ribosomal protein uL4 family. As to quaternary structure, component of the large ribosomal subunit. May bind IPO9 with low affinity. Interacts with RBM3. Post-translationally, citrullinated by PADI4.

It localises to the cytoplasm. Functionally, component of the large ribosomal subunit. The ribosome is a large ribonucleoprotein complex responsible for the synthesis of proteins in the cell. The chain is Large ribosomal subunit protein uL4 (Rpl4) from Mus musculus (Mouse).